We begin with the raw amino-acid sequence, 704 residues long: DNA ligase (704 aa).

Residues 43–47 (DADYD), 92–93 (SL), and Glu124 each bind NAD(+). Residue Lys126 is the N6-AMP-lysine intermediate of the active site. NAD(+) contacts are provided by Arg147, Glu182, Lys298, and Lys322. Residues Cys427, Cys430, Cys445, and Cys451 each coordinate Zn(2+). The BRCT domain maps to 625 to 704 (PVASPVAGKI…DGWLRLIGDA (80 aa)).

Belongs to the NAD-dependent DNA ligase family. LigA subfamily. Requires Mg(2+) as cofactor. Mn(2+) serves as cofactor.

The enzyme catalyses NAD(+) + (deoxyribonucleotide)n-3'-hydroxyl + 5'-phospho-(deoxyribonucleotide)m = (deoxyribonucleotide)n+m + AMP + beta-nicotinamide D-nucleotide.. In terms of biological role, DNA ligase that catalyzes the formation of phosphodiester linkages between 5'-phosphoryl and 3'-hydroxyl groups in double-stranded DNA using NAD as a coenzyme and as the energy source for the reaction. It is essential for DNA replication and repair of damaged DNA. The sequence is that of DNA ligase from Cereibacter sphaeroides (strain ATCC 17023 / DSM 158 / JCM 6121 / CCUG 31486 / LMG 2827 / NBRC 12203 / NCIMB 8253 / ATH 2.4.1.) (Rhodobacter sphaeroides).